A 433-amino-acid chain; its full sequence is Keratin, type I cytoskeletal 17 (433 aa).

Residues 1–24 (MTTTIRQFTSSSSIKGSSGLGGGS) form a disordered region. The interval 1-83 (MTTTIRQFTS…GGVDGLLAGG (83 aa)) is head. A phosphoserine mark is found at S12 and S13. A Glycyl lysine isopeptide (Lys-Gly) (interchain with G-Cter in SUMO1); alternate cross-link involves residue K15. A Glycyl lysine isopeptide (Lys-Gly) (interchain with G-Cter in SUMO2); alternate cross-link involves residue K15. Phosphoserine is present on residues S25, S32, S34, and S39. At S44 the chain carries Phosphoserine; by RPS6KA1. The tract at residues 84–120 (EKATMQNLNDRLASYLDKVRALEEANTELEVKIRDWY) is coil 1A. Positions 84–395 (EKATMQNLND…RLLEGEDAHL (312 aa)) constitute an IF rod domain. At T110 the chain carries Phosphothreonine. The tract at residues 121 to 138 (QKQAPGPARDYSAYYHTI) is linker 1. Residues 139–230 (EDLKNKILVA…NHEEEMNALR (92 aa)) form a coil 1B region. Residues 231 to 250 (GQVGGEINVEMDAAPGVDLS) form a linker 12 region. The interval 251–392 (RILSEMRDQY…TYRRLLEGED (142 aa)) is coil 2. A Glycyl lysine isopeptide (Lys-Gly) (interchain with G-Cter in SUMO2) cross-link involves residue K278. Position 279 is a phosphothreonine (T279). Phosphoserine is present on S323. Residues 393 to 433 (AHLTQYKPKEPVTTRQVRTIVEEVQDGKVISSREQVHQTTR) form a tail region. Residues K399, K401, and K420 each participate in a glycyl lysine isopeptide (Lys-Gly) (interchain with G-Cter in SUMO1); alternate cross-link. Glycyl lysine isopeptide (Lys-Gly) (interchain with G-Cter in SUMO2); alternate cross-links involve residues K399, K401, and K420.

It belongs to the intermediate filament family. In terms of assembly, heterodimer of a type I and a type II keratin. KRT17 associates with KRT6 isomers (KRT6A or KRT6B). Interacts with TRADD and SFN. In terms of processing, phosphorylation at Ser-44 occurs in a growth- and stress-dependent fashion in skin keratinocytes, it has no effect on filament organization. In terms of tissue distribution, expressed strongly in outer root sheath and medulla region of hair follicle and in the early differentiating epithelial cells (trichocytes) within the hair bulb region. Weak expression in the matrix cells of hair bulb. Also present in the sweat gland within the skin, vibrissae follicle, salivary gland, tooth and thymus.

The protein localises to the cytoplasm. Functionally, type I keratin involved in the formation and maintenance of various skin appendages, specifically in determining shape and orientation of hair. Required for the correct growth of hair follicles, in particular for the persistence of the anagen (growth) state. Modulates the function of TNF-alpha in the specific context of hair cycling. Regulates protein synthesis and epithelial cell growth through binding to the adapter protein SFN and by stimulating Akt/mTOR pathway. Involved in tissue repair. May be a marker of basal cell differentiation in complex epithelia and therefore indicative of a certain type of epithelial 'stem cells'. Acts as a promoter of epithelial proliferation by acting a regulator of immune response in skin: promotes Th1/Th17-dominated immune environment contributing to the development of basaloid skin tumors. May act as an autoantigen in the immunopathogenesis of psoriasis, with certain peptide regions being a major target for autoreactive T-cells and hence causing their proliferation. The protein is Keratin, type I cytoskeletal 17 (Krt17) of Mus musculus (Mouse).